Here is a 226-residue protein sequence, read N- to C-terminus: Ribose-5-phosphate isomerase A (226 aa).

Substrate is bound by residues 32–35 (TGST), 85–88 (DGAD), and 98–101 (KGGG). Glu-107 acts as the Proton acceptor in catalysis. Position 125 (Lys-125) interacts with substrate.

This sequence belongs to the ribose 5-phosphate isomerase family. As to quaternary structure, homodimer.

It carries out the reaction aldehydo-D-ribose 5-phosphate = D-ribulose 5-phosphate. Its pathway is carbohydrate degradation; pentose phosphate pathway; D-ribose 5-phosphate from D-ribulose 5-phosphate (non-oxidative stage): step 1/1. Its function is as follows. Catalyzes the reversible conversion of ribose-5-phosphate to ribulose 5-phosphate. The chain is Ribose-5-phosphate isomerase A from Saccharophagus degradans (strain 2-40 / ATCC 43961 / DSM 17024).